Consider the following 231-residue polypeptide: 5'-methylthioadenosine/S-adenosylhomocysteine nucleosidase (231 aa).

The Proton acceptor role is filled by Glu12. Residues Gly78, Val153, and Met174–Glu175 contribute to the substrate site. Asp198 serves as the catalytic Proton donor.

The protein belongs to the PNP/UDP phosphorylase family. MtnN subfamily.

The enzyme catalyses S-adenosyl-L-homocysteine + H2O = S-(5-deoxy-D-ribos-5-yl)-L-homocysteine + adenine. The catalysed reaction is S-methyl-5'-thioadenosine + H2O = 5-(methylsulfanyl)-D-ribose + adenine. It catalyses the reaction 5'-deoxyadenosine + H2O = 5-deoxy-D-ribose + adenine. It participates in amino-acid biosynthesis; L-methionine biosynthesis via salvage pathway; S-methyl-5-thio-alpha-D-ribose 1-phosphate from S-methyl-5'-thioadenosine (hydrolase route): step 1/2. Functionally, catalyzes the irreversible cleavage of the glycosidic bond in both 5'-methylthioadenosine (MTA) and S-adenosylhomocysteine (SAH/AdoHcy) to adenine and the corresponding thioribose, 5'-methylthioribose and S-ribosylhomocysteine, respectively. Also cleaves 5'-deoxyadenosine, a toxic by-product of radical S-adenosylmethionine (SAM) enzymes, into 5-deoxyribose and adenine. The polypeptide is 5'-methylthioadenosine/S-adenosylhomocysteine nucleosidase (Aliivibrio salmonicida (strain LFI1238) (Vibrio salmonicida (strain LFI1238))).